A 307-amino-acid polypeptide reads, in one-letter code: Stage III sporulation protein AA (307 aa).

143-150 (GPPQTGKT) contributes to the ATP binding site.

The polypeptide is Stage III sporulation protein AA (spoIIIAA) (Bacillus subtilis (strain 168)).